We begin with the raw amino-acid sequence, 412 residues long: Transcription factor IIIA (412 aa).

Residues 1–20 (MSESDETKSISSLISSSSSS) form a disordered region. Low complexity predominate over residues 9 to 20 (SISSLISSSSSS). C2H2-type zinc fingers lie at residues 25–49 (YICT…LRTH), 55–79 (YKCT…IVSH), 85–107 (FHCS…EITH), 111–136 (FKCT…LSVH), 140–162 (LTCK…KLKH), 169–194 (YQCD…KQSH), and 197–219 (LKCP…MLSH). The C2H2-type 8; degenerate zinc-finger motif lies at 228-252 (WTCDYCDVGKFAKKNELVEHYNIFH). The segment at 285–316 (LETEKLKVEEDEEDEEDSLDEKRSDVRSDSMS) is disordered. Over residues 293-303 (EEDEEDEEDSL) the composition is skewed to acidic residues. Residues 345–369 (INCPKNNCDRMFSREYDLRRHLKWH) form a C2H2-type 9 zinc finger.

It is found in the nucleus. Its function is as follows. Transcription factor required for transcription of 5S rRNA by RNA polymerase III. The sequence is that of Transcription factor IIIA (PZF1) from Candida albicans (strain SC5314 / ATCC MYA-2876) (Yeast).